The primary structure comprises 405 residues: Cytoplasmic tRNA 2-thiolation protein 2 (405 aa).

The protein belongs to the CTU2/NCS2 family.

The protein localises to the cytoplasm. The protein operates within tRNA modification; 5-methoxycarbonylmethyl-2-thiouridine-tRNA biosynthesis. Functionally, plays a central role in 2-thiolation of mcm(5)S(2)U at tRNA wobble positions of tRNA(Lys), tRNA(Glu) and tRNA(Gln). May act by forming a heterodimer with NCS6/CTU1 that ligates sulfur from thiocarboxylated URM1 onto the uridine of tRNAs at wobble position. The protein is Cytoplasmic tRNA 2-thiolation protein 2 of Drosophila persimilis (Fruit fly).